Consider the following 102-residue polypeptide: UPF0328 protein ECU10_1820 (102 aa).

It belongs to the UPF0328 family.

The chain is UPF0328 protein ECU10_1820 from Encephalitozoon cuniculi (strain GB-M1) (Microsporidian parasite).